Reading from the N-terminus, the 224-residue chain is MERLLLWVSVLASLPEAFAHRDLTGKVFVFPRESATDHVKLITKLEKPLQNFTLCFRAYSDLSRGYSLFSYNLQGKDNELLVFKHRIGEYSLYIGKTKVTFKVREVFPRPVHICTSWESSTGIAEFWINGEPLVKKGLRQGYSVGAYPRIVLGQEQDSYGGGFDKTQSFVGEIGDLYMWGSVLSPNEIRLVYQGLSFPHPTILDWQALNYEMNGYVVIKPRVWS.

A signal peptide spans 1–19 (MERLLLWVSVLASLPEAFA). Residues 24-224 (TGKVFVFPRE…YVVIKPRVWS (201 aa)) form the Pentraxin (PTX) domain. A glycan (N-linked (GlcNAc...) asparagine) is linked at Asn51. Cys55 and Cys114 form a disulfide bridge. 6 residues coordinate Ca(2+): Asp77, Asn78, Glu155, Gln156, Asp157, and Gln167.

This sequence belongs to the pentraxin family. Homopentamer. Pentraxin (or pentaxin) have a discoid arrangement of 5 non-covalently bound subunits. Requires Ca(2+) as cofactor.

It is found in the secreted. In Sus scrofa (Pig), this protein is Serum amyloid P-component (APCS).